The chain runs to 459 residues: Putrescine aminotransferase (459 aa).

Pyridoxal 5'-phosphate contacts are provided by residues 150–151 (GT) and Gln274. Lys300 is subject to N6-(pyridoxal phosphate)lysine. Thr332 contacts pyridoxal 5'-phosphate.

It belongs to the class-III pyridoxal-phosphate-dependent aminotransferase family. Putrescine aminotransferase subfamily. Pyridoxal 5'-phosphate serves as cofactor.

It catalyses the reaction an alkane-alpha,omega-diamine + 2-oxoglutarate = an omega-aminoaldehyde + L-glutamate. The enzyme catalyses putrescine + 2-oxoglutarate = 1-pyrroline + L-glutamate + H2O. It carries out the reaction cadaverine + 2-oxoglutarate = 5-aminopentanal + L-glutamate. The protein operates within amine and polyamine degradation; putrescine degradation; 4-aminobutanal from putrescine (transaminase route): step 1/1. Catalyzes the aminotransferase reaction from putrescine to 2-oxoglutarate, leading to glutamate and 4-aminobutanal, which spontaneously cyclizes to form 1-pyrroline. This is the first step in one of two pathways for putrescine degradation, where putrescine is converted into 4-aminobutanoate (gamma-aminobutyrate or GABA) via 4-aminobutanal. Also functions as a cadaverine transaminase in a a L-lysine degradation pathway to succinate that proceeds via cadaverine, glutarate and L-2-hydroxyglutarate. In Escherichia coli O81 (strain ED1a), this protein is Putrescine aminotransferase.